A 688-amino-acid chain; its full sequence is Glycine--tRNA ligase beta subunit (688 aa).

This sequence belongs to the class-II aminoacyl-tRNA synthetase family. Tetramer of two alpha and two beta subunits.

The protein localises to the cytoplasm. It carries out the reaction tRNA(Gly) + glycine + ATP = glycyl-tRNA(Gly) + AMP + diphosphate. In Listeria monocytogenes serotype 4a (strain HCC23), this protein is Glycine--tRNA ligase beta subunit.